Reading from the N-terminus, the 268-residue chain is E3 ubiquitin-protein ligase IAP-3 (268 aa).

BIR repeat units follow at residues lysine 18–valine 84 and glutamate 111–valine 178. Zn(2+)-binding residues include cysteine 148, cysteine 151, histidine 168, and cysteine 175. The RING-type zinc-finger motif lies at cysteine 221 to arginine 256.

Belongs to the IAP family. Post-translationally, auto-ubiquitinated.

The catalysed reaction is S-ubiquitinyl-[E2 ubiquitin-conjugating enzyme]-L-cysteine + [acceptor protein]-L-lysine = [E2 ubiquitin-conjugating enzyme]-L-cysteine + N(6)-ubiquitinyl-[acceptor protein]-L-lysine.. Functionally, RING-finger E3 ubiquitin ligase required to prevent cellular apoptosis in infected cells. Ubiquitinates and subsequently targets host pro-apoptotic cellular proteins such as HID for degradation by the proteasome. This chain is E3 ubiquitin-protein ligase IAP-3 (IAP3), found in Orgyia pseudotsugata multicapsid polyhedrosis virus (OpMNPV).